We begin with the raw amino-acid sequence, 76 residues long: Membrane protein UL43 homolog (76 aa).

Helical transmembrane passes span 7–27 (AVCV…SLAF) and 54–74 (ISRW…ATII).

The protein belongs to the alphaherpesvirinae HHV-1 UL43 family.

Its subcellular location is the membrane. In Equus caballus (Horse), this protein is Membrane protein UL43 homolog.